A 253-amino-acid chain; its full sequence is Glucosamine-6-phosphate deaminase (253 aa).

Catalysis depends on Asp-67, which acts as the Proton acceptor; for enolization step. The active-site For ring-opening step is the Asn-136. His-138 serves as the catalytic Proton acceptor; for ring-opening step. The active-site For ring-opening step is Glu-143.

Belongs to the glucosamine/galactosamine-6-phosphate isomerase family. NagB subfamily.

It catalyses the reaction alpha-D-glucosamine 6-phosphate + H2O = beta-D-fructose 6-phosphate + NH4(+). It functions in the pathway amino-sugar metabolism; N-acetylneuraminate degradation; D-fructose 6-phosphate from N-acetylneuraminate: step 5/5. In terms of biological role, catalyzes the reversible isomerization-deamination of glucosamine 6-phosphate (GlcN6P) to form fructose 6-phosphate (Fru6P) and ammonium ion. The polypeptide is Glucosamine-6-phosphate deaminase (Thermoanaerobacter sp. (strain X514)).